The sequence spans 1091 residues: Leucine--tRNA ligase, cytoplasmic (1091 aa).

The short motif at 53 to 63 is the 'HIGH' region element; that stretch reads PYMNGYLHIGH. A 'KMSKS' region motif is present at residues 715–719; sequence KMSKS. Position 718 (lysine 718) interacts with ATP.

It belongs to the class-I aminoacyl-tRNA synthetase family.

It is found in the cytoplasm. Its subcellular location is the cytosol. The catalysed reaction is tRNA(Leu) + L-leucine + ATP = L-leucyl-tRNA(Leu) + AMP + diphosphate. In terms of biological role, catalyzes the specific attachment of an amino acid to its cognate tRNA in a two step reaction: the amino acid (AA) is first activated by ATP to form AA-AMP and then transferred to the acceptor end of the tRNA. The sequence is that of Leucine--tRNA ligase, cytoplasmic from Arabidopsis thaliana (Mouse-ear cress).